Here is a 299-residue protein sequence, read N- to C-terminus: Probable lipid kinase YegS-like (299 aa).

In terms of domain architecture, DAGKc spans 2 to 133 (EKNPITLLIL…IDIAKVNDGH (132 aa)). Residues threonine 40, 66-72 (GDGTVNE), and threonine 95 contribute to the ATP site. Positions 215, 218, and 220 each coordinate Mg(2+). Glutamate 271 serves as the catalytic Proton acceptor.

The protein belongs to the diacylglycerol/lipid kinase family. YegS lipid kinase subfamily. Mg(2+) is required as a cofactor. Ca(2+) serves as cofactor.

The protein resides in the cytoplasm. Its function is as follows. Probably phosphorylates lipids; the in vivo substrate is unknown. The protein is Probable lipid kinase YegS-like of Pectobacterium atrosepticum (strain SCRI 1043 / ATCC BAA-672) (Erwinia carotovora subsp. atroseptica).